A 117-amino-acid chain; its full sequence is DNA-directed RNA polymerase subunit omega (117 aa).

The protein belongs to the RNA polymerase subunit omega family. The RNAP catalytic core consists of 2 alpha, 1 beta, 1 beta' and 1 omega subunit. When a sigma factor is associated with the core the holoenzyme is formed, which can initiate transcription.

It catalyses the reaction RNA(n) + a ribonucleoside 5'-triphosphate = RNA(n+1) + diphosphate. Functionally, promotes RNA polymerase assembly. Latches the N- and C-terminal regions of the beta' subunit thereby facilitating its interaction with the beta and alpha subunits. The protein is DNA-directed RNA polymerase subunit omega of Roseobacter denitrificans (strain ATCC 33942 / OCh 114) (Erythrobacter sp. (strain OCh 114)).